We begin with the raw amino-acid sequence, 128 residues long: Large ribosomal subunit protein uL22 (128 aa).

The protein belongs to the universal ribosomal protein uL22 family. Part of the 50S ribosomal subunit.

Functionally, this protein binds specifically to 23S rRNA; its binding is stimulated by other ribosomal proteins, e.g. L4, L17, and L20. It is important during the early stages of 50S assembly. It makes multiple contacts with different domains of the 23S rRNA in the assembled 50S subunit and ribosome. Its function is as follows. The globular domain of the protein is located near the polypeptide exit tunnel on the outside of the subunit, while an extended beta-hairpin is found that lines the wall of the exit tunnel in the center of the 70S ribosome. This is Large ribosomal subunit protein uL22 from Prochlorococcus marinus (strain MIT 9301).